The chain runs to 403 residues: D-mannonate dehydratase (403 aa).

Substrate is bound by residues Asn38 and His123. Catalysis depends on Tyr160, which acts as the Proton donor/acceptor. Asp211 serves as a coordination point for Mg(2+). The Proton donor/acceptor role is filled by His213. 2 residues coordinate Mg(2+): Glu237 and Glu263. Residues Glu263, Arg284, His313, Asp317, and Glu340 each coordinate substrate.

It belongs to the mandelate racemase/muconate lactonizing enzyme family. GalD subfamily. The cofactor is Mg(2+).

It catalyses the reaction D-mannonate = 2-dehydro-3-deoxy-D-gluconate + H2O. It functions in the pathway carbohydrate metabolism; pentose and glucuronate interconversion. In terms of biological role, catalyzes the dehydration of D-mannonate. Has no detectable activity with a panel of 70 other acid sugars (in vitro). The protein is D-mannonate dehydratase of Sphingomonas sp. (strain SKA58).